Reading from the N-terminus, the 389-residue chain is S-adenosylmethionine synthase (389 aa).

His17 contacts ATP. Mg(2+) is bound at residue Asp19. Glu45 is a binding site for K(+). L-methionine is bound by residues Glu58 and Gln101. Residues 101–111 (QSPDIAQGVTE) are flexible loop. ATP-binding positions include 168–170 (DSK), 234–235 (RF), Asp243, 249–250 (RK), Ala266, and Lys270. Asp243 contacts L-methionine. Lys274 serves as a coordination point for L-methionine.

This sequence belongs to the AdoMet synthase family. As to quaternary structure, homotetramer; dimer of dimers. The cofactor is Mg(2+). It depends on K(+) as a cofactor.

The protein resides in the cytoplasm. The catalysed reaction is L-methionine + ATP + H2O = S-adenosyl-L-methionine + phosphate + diphosphate. It functions in the pathway amino-acid biosynthesis; S-adenosyl-L-methionine biosynthesis; S-adenosyl-L-methionine from L-methionine: step 1/1. Functionally, catalyzes the formation of S-adenosylmethionine (AdoMet) from methionine and ATP. The overall synthetic reaction is composed of two sequential steps, AdoMet formation and the subsequent tripolyphosphate hydrolysis which occurs prior to release of AdoMet from the enzyme. This chain is S-adenosylmethionine synthase, found in Geotalea uraniireducens (strain Rf4) (Geobacter uraniireducens).